Consider the following 614-residue polypeptide: MTIQILSPQLANQIAAGEVVERPASVIKELVENSLDAGATRVDIEIDKGGSKLIKIQDNGSGIPKSELNLALSRHATSKLSTLDDLDAILSFGFRGEALASISSVSRLTLTSRTAEQTEAWQAYAEGSDMAVKVIPAAHPVGTTIEAVDLFFNTPARRRFLKSDKTEFTHIDEWLKRIALVKPEIHFTLKHNGKQVRNYRPANNQDQYLMRLAQICGKNFAEQAIEIDCQHEGLTLSGYIQSPFFTSPASDTQFFYVNGRLIRDRLVNHAVRQAFSEHGTGELASYVLMLEIAPHQVDVNVHPAKHEVRFHQSRYVHDYILQALQSALMQVARASISLPEEKLVEFVEDDWHSKPLSTGRVSEADPSNYATQSKFDEKPRESGSQGQSSSISAPSSYSRGGEYSARSQPELPSASEIASYTQLLKTPQTAQASKLVNSDLKTPMPPVLAGQYWVYAGDELSLLPIDIVAKWLVKRDILAKIDNGLVSQPLLMPVSIKVDEDWLNTIDEREQLLRQLGIEITIRLGQLIIKKVPPYLRQSQLVTVIPELLQWVRFEEPTHEALALWLAKQDDGKFESAVATWSAFSQLDDEIQQELAQKAKVLPWQSWLEEQLSD.

The interval 355-411 (PLSTGRVSEADPSNYATQSKFDEKPRESGSQGQSSSISAPSSYSRGGEYSARSQPEL) is disordered. Residues 382-401 (SGSQGQSSSISAPSSYSRGG) show a composition bias toward low complexity.

Belongs to the DNA mismatch repair MutL/HexB family.

In terms of biological role, this protein is involved in the repair of mismatches in DNA. It is required for dam-dependent methyl-directed DNA mismatch repair. May act as a 'molecular matchmaker', a protein that promotes the formation of a stable complex between two or more DNA-binding proteins in an ATP-dependent manner without itself being part of a final effector complex. The polypeptide is DNA mismatch repair protein MutL (Shewanella woodyi (strain ATCC 51908 / MS32)).